The primary structure comprises 456 residues: Bifunctional protein GlmU (456 aa).

Positions 1–229 (MLNNAMSVVI…LSEVEGVNNR (229 aa)) are pyrophosphorylase. Residues 11–14 (LAAG), K25, Q76, 81–82 (GT), 103–105 (YGD), G140, E154, N169, and N227 contribute to the UDP-N-acetyl-alpha-D-glucosamine site. A Mg(2+)-binding site is contributed by D105. Mg(2+) is bound at residue N227. The linker stretch occupies residues 230–250 (LQLSRLERVYQSEQAEKLLLA). Residues 251 to 456 (GVMLRDPARF…EGWRRPVKKK (206 aa)) are N-acetyltransferase. UDP-N-acetyl-alpha-D-glucosamine is bound by residues R333 and K351. Residue H363 is the Proton acceptor of the active site. The UDP-N-acetyl-alpha-D-glucosamine site is built by Y366 and N377. Residues A380, 386 to 387 (NY), S405, A423, and R440 contribute to the acetyl-CoA site.

It in the N-terminal section; belongs to the N-acetylglucosamine-1-phosphate uridyltransferase family. This sequence in the C-terminal section; belongs to the transferase hexapeptide repeat family. In terms of assembly, homotrimer. The cofactor is Mg(2+).

The protein localises to the cytoplasm. It catalyses the reaction alpha-D-glucosamine 1-phosphate + acetyl-CoA = N-acetyl-alpha-D-glucosamine 1-phosphate + CoA + H(+). It carries out the reaction N-acetyl-alpha-D-glucosamine 1-phosphate + UTP + H(+) = UDP-N-acetyl-alpha-D-glucosamine + diphosphate. It functions in the pathway nucleotide-sugar biosynthesis; UDP-N-acetyl-alpha-D-glucosamine biosynthesis; N-acetyl-alpha-D-glucosamine 1-phosphate from alpha-D-glucosamine 6-phosphate (route II): step 2/2. It participates in nucleotide-sugar biosynthesis; UDP-N-acetyl-alpha-D-glucosamine biosynthesis; UDP-N-acetyl-alpha-D-glucosamine from N-acetyl-alpha-D-glucosamine 1-phosphate: step 1/1. Its pathway is bacterial outer membrane biogenesis; LPS lipid A biosynthesis. In terms of biological role, catalyzes the last two sequential reactions in the de novo biosynthetic pathway for UDP-N-acetylglucosamine (UDP-GlcNAc). The C-terminal domain catalyzes the transfer of acetyl group from acetyl coenzyme A to glucosamine-1-phosphate (GlcN-1-P) to produce N-acetylglucosamine-1-phosphate (GlcNAc-1-P), which is converted into UDP-GlcNAc by the transfer of uridine 5-monophosphate (from uridine 5-triphosphate), a reaction catalyzed by the N-terminal domain. This chain is Bifunctional protein GlmU, found in Escherichia coli O6:K15:H31 (strain 536 / UPEC).